The primary structure comprises 270 residues: MEQFYYILKYLILGLFQGLTEPIPISSSGHLVLAQHLLGLKIEGFSFELLVNSASLLAVLLIYRNDLIRLTKNGLSYIFTRAEDAKSDFFFIIYLVIATIPAGVIGVLFKDYIDQYLKGVKMVGISLLITAVGLWIIRNLRGRKNDGDLSMKDAIIVGLAQACALIPGISRSGATIVAAMLLGMKQETALRFSFLLYIPVSLGGLLLSITDIAKDPNLDTLFVPYIVAFIATFIMTYISLKWFMNIMAKGNLKYFSFYCIIVGVLTLIFL.

7 helical membrane passes run 5–25 (YYILKYLILGLFQGLTEPIPI), 42–62 (IEGFSFELLVNSASLLAVLLI), 89–109 (FFFIIYLVIATIPAGVIGVLF), 117–137 (LKGVKMVGISLLITAVGLWII), 192–212 (FSFLLYIPVSLGGLLLSITDI), 220–240 (TLFVPYIVAFIATFIMTYISL), and 250–270 (GNLKYFSFYCIIVGVLTLIFL).

The protein belongs to the UppP family.

Its subcellular location is the cell membrane. It catalyses the reaction di-trans,octa-cis-undecaprenyl diphosphate + H2O = di-trans,octa-cis-undecaprenyl phosphate + phosphate + H(+). Its function is as follows. Catalyzes the dephosphorylation of undecaprenyl diphosphate (UPP). Confers resistance to bacitracin. This chain is Undecaprenyl-diphosphatase 1, found in Bacillus cereus (strain ATCC 10987 / NRS 248).